The sequence spans 117 residues: Large ribosomal subunit protein uL18 (117 aa).

Belongs to the universal ribosomal protein uL18 family. As to quaternary structure, part of the 50S ribosomal subunit; part of the 5S rRNA/L5/L18/L25 subcomplex. Contacts the 5S and 23S rRNAs.

Its function is as follows. This is one of the proteins that bind and probably mediate the attachment of the 5S RNA into the large ribosomal subunit, where it forms part of the central protuberance. The protein is Large ribosomal subunit protein uL18 of Aliivibrio salmonicida (strain LFI1238) (Vibrio salmonicida (strain LFI1238)).